Here is a 704-residue protein sequence, read N- to C-terminus: DNA ligase (704 aa).

Residues 43–47 (DADYD), 92–93 (SL), and glutamate 124 each bind NAD(+). Lysine 126 acts as the N6-AMP-lysine intermediate in catalysis. NAD(+) is bound by residues arginine 147, glutamate 182, lysine 298, and lysine 322. Residues cysteine 427, cysteine 430, cysteine 445, and cysteine 451 each contribute to the Zn(2+) site. A BRCT domain is found at 625–704 (PVESPIAGKI…DAWLRLIGDA (80 aa)).

Belongs to the NAD-dependent DNA ligase family. LigA subfamily. Mg(2+) is required as a cofactor. Mn(2+) serves as cofactor.

The catalysed reaction is NAD(+) + (deoxyribonucleotide)n-3'-hydroxyl + 5'-phospho-(deoxyribonucleotide)m = (deoxyribonucleotide)n+m + AMP + beta-nicotinamide D-nucleotide.. DNA ligase that catalyzes the formation of phosphodiester linkages between 5'-phosphoryl and 3'-hydroxyl groups in double-stranded DNA using NAD as a coenzyme and as the energy source for the reaction. It is essential for DNA replication and repair of damaged DNA. In Cereibacter sphaeroides (strain ATCC 17025 / ATH 2.4.3) (Rhodobacter sphaeroides), this protein is DNA ligase.